Here is a 600-residue protein sequence, read N- to C-terminus: MAKEIILGIDLGTTNSVVAIIENQKPVVLENPNGKRTTPSVVAFKNNEEIVGDAAKRQLETNPEAIASIKRLMGTDKTVRANERDYKPEEISAKILAYLKEYAEKKIGHKVTKAVITVPAYFDNAQREATKNAGKIAGLQVERIINEPTAAALAFGLDKTEKEMKVLVYDLGGGTFDVSVLELSGGTFEVLSTSGDNHLGGDDWDNEIVNWLVKKIKEEYDFDPKSDKMALTRLKEEAEKTKINLSNQSVSTVSLPFLGMGKNGPINVELELKRSEFEKMTAHLIDRTRKPIVDALKQAKIEASDLDEVLLVGGSTRMPAVQSMIEHTLNKKPNRSINPDEVVAIGAAIQGGVLAGEISDVLLLDVTPLTLGIETLGGIATPLIPRNTTIPVTKSQIFSTAEDNQTEVTISVVQGERQLAADNKMLGRFNLSGIEAAPRGLPQIEVSFSIDVNGITTVSAKDKKTGKEQTITIKNTSTLSEEEINKMIQEAEENREADALKKDKIETTVRAEGLINQLEKSITDQGEKIDPKQKELLEKQIQELKDLLKEEKTDELKLKLDQIEAAAQSFAQATAQQANTSESDPKADDSNTIDAEIKQD.

The residue at position 175 (Thr175) is a Phosphothreonine; by autocatalysis. Positions 569-578 are enriched in low complexity; that stretch reads SFAQATAQQA. The tract at residues 569-600 is disordered; it reads SFAQATAQQANTSESDPKADDSNTIDAEIKQD. Basic and acidic residues predominate over residues 583–600; sequence SDPKADDSNTIDAEIKQD.

It belongs to the heat shock protein 70 family.

Functionally, acts as a chaperone. The chain is Chaperone protein DnaK from Mesomycoplasma hyopneumoniae (strain 7448) (Mycoplasma hyopneumoniae).